A 555-amino-acid chain; its full sequence is Alpha-copaene synthase (555 aa).

Mg(2+) is bound by residues Asp-312, Asp-316, Asp-452, Ser-456, and Glu-460. The DDXXD motif motif lies at 312-316 (DDTYD).

The protein belongs to the terpene synthase family. Mg(2+) is required as a cofactor. In terms of tissue distribution, mainly expressed in sunflower trichomes.

The catalysed reaction is (2E,6E)-farnesyl diphosphate = alpha-copaene + diphosphate. The enzyme catalyses (2E,6E)-farnesyl diphosphate = alpha-muurolene + diphosphate. It catalyses the reaction (2E,6E)-farnesyl diphosphate = alpha-humulene + diphosphate. The protein operates within secondary metabolite biosynthesis; terpenoid biosynthesis. In terms of biological role, involved in the biosynthesis of germacrene-derived sesquiterpene lactones. Catalyzes the cyclization of farnesyl diphosphate to alpha-copaene, delta-cadinene, alpha-muurolene, beta-caryophyllene and alpha-humulene. This Helianthus annuus (Common sunflower) protein is Alpha-copaene synthase (CS).